The sequence spans 78 residues: Sec-independent protein translocase protein TatA (78 aa).

The helical transmembrane segment at 1–21 (MGGISIWQLLIIAVIVVLLFG) threads the bilayer. The segment covering 47 to 59 (ESEKKDADFEPKS) has biased composition (basic and acidic residues). A disordered region spans residues 47–78 (ESEKKDADFEPKSLEQQNKQAATESKKDKEQA). The span at 60–69 (LEQQNKQAAT) shows a compositional bias: polar residues.

The protein belongs to the TatA/E family. In terms of assembly, the Tat system comprises two distinct complexes: a TatABC complex, containing multiple copies of TatA, TatB and TatC subunits, and a separate TatA complex, containing only TatA subunits. Substrates initially bind to the TatABC complex, which probably triggers association of the separate TatA complex to form the active translocon.

The protein localises to the cell inner membrane. Its function is as follows. Part of the twin-arginine translocation (Tat) system that transports large folded proteins containing a characteristic twin-arginine motif in their signal peptide across membranes. TatA could form the protein-conducting channel of the Tat system. This is Sec-independent protein translocase protein TatA from Vibrio vulnificus (strain YJ016).